A 769-amino-acid chain; its full sequence is Serine protease HtrA-like (769 aa).

Residues 1-20 show a composition bias toward basic residues; it reads MDIGKKHVIPKSQYRRKRRE. The segment at 1-390 is disordered; the sequence is MDIGKKHVIP…ATSKLNKGRA (390 aa). Basic and acidic residues-rich tracts occupy residues 21 to 64 and 71 to 108; these read FFHN…ERFK and LEQRNRDVNENKAEESKSNQDSKSAYNRDHYLTDDVSK. Positions 126–137 are enriched in polar residues; the sequence is YEQNSEATLSTK. Basic and acidic residues predominate over residues 138–186; it reads STDKVESTEMRKLSSDKNKVGHEEQHVLSKPSEHDKETRIDSESSRTDS. Residues 247-262 show a composition bias toward polar residues; that stretch reads QQSQNEQTKTYTYGDS. Basic and acidic residues-rich tracts occupy residues 264 to 296 and 310 to 330; these read QNDKSNHENDLSHHIPSISDDKDNVMRENHIVD and KTDDDRKLDEKIHVEDKHKQN. The segment covering 331–347 has biased composition (polar residues); that stretch reads ADSSETVGYQSQSTASH. The span at 348 to 364 shows a compositional bias: basic and acidic residues; it reads RSTEKRNISINDHDKLN. The segment covering 365–390 has biased composition (polar residues); it reads GQKTNTKTSANNNQKKATSKLNKGRA. The chain crosses the membrane as a helical span at residues 410–430; that stretch reads LVILMGIIILIVILNAIFNNV. Residues H504, D534, and S619 each act as charge relay system in the active site. One can recognise a PDZ domain in the interval 680–733; that stretch reads IASLNSFERQAVKLPGKVKNGVVVDQVDNNGLADQSGLKKGDVITELDGKLLED.

Belongs to the peptidase S1C family.

It localises to the cell membrane. The protein is Serine protease HtrA-like of Staphylococcus aureus (strain COL).